Consider the following 570-residue polypeptide: Probable metalloreductase AIM14 (570 aa).

7 consecutive transmembrane segments (helical) span residues 21-41 (IKYG…LALL), 70-90 (AIHL…HYSL), 101-118 (LGRL…LTLR), 142-162 (IITV…AIDD), 177-197 (FVGF…IGPM), 204-224 (LFYI…PIHS), and 230-250 (FPFL…RIVF). The Ferric oxidoreductase domain occupies 101–219 (LGRLSYALIP…NLVNVAFILL (119 aa)). In terms of domain architecture, FAD-binding FR-type spans 250-388 (FAKSLMILNK…GGSGISFALP (139 aa)). Polar residues predominate over residues 481–505 (SNFNSENADSNDNTPETSHSPTKEN). The disordered stretch occupies residues 481 to 507 (SNFNSENADSNDNTPETSHSPTKENGS).

This sequence belongs to the ferric reductase (FRE) family. AIM14 subfamily. As to quaternary structure, interacts with ribosomes.

The protein localises to the membrane. Its function is as follows. Probable cell surface metalloreductase. May be involved in iron or copper homeostasis. This is Probable metalloreductase AIM14 (AIM14) from Saccharomyces cerevisiae (strain RM11-1a) (Baker's yeast).